Reading from the N-terminus, the 354-residue chain is Phospho-N-acetylmuramoyl-pentapeptide-transferase (354 aa).

Transmembrane regions (helical) follow at residues 23–43 (IAFFAAFFLTAFFMPRFIAWA), 66–86 (TPTMGGIVFITATLLSSLLCS), 88–108 (LTNTFVIGGILCLFGFSFIGF), 138–158 (FALSIILFLFANLSGEFFIPF), 161–181 (YALFNLQFFAIFFWMLVITAS), 193–213 (GLASIPSIFALVSLGIFVYLC), 227–247 (VVGVGELCVVIFALIGAILGF), 257–277 (VFMGDSGSLSVGAFIGYTGVV), 282–302 (ILLIIIGFVFVIETLSVILQV), and 331–351 (KIIVRFWIIALIANIIALTTL).

The protein belongs to the glycosyltransferase 4 family. MraY subfamily. The cofactor is Mg(2+).

The protein localises to the cell inner membrane. It carries out the reaction UDP-N-acetyl-alpha-D-muramoyl-L-alanyl-gamma-D-glutamyl-meso-2,6-diaminopimeloyl-D-alanyl-D-alanine + di-trans,octa-cis-undecaprenyl phosphate = di-trans,octa-cis-undecaprenyl diphospho-N-acetyl-alpha-D-muramoyl-L-alanyl-D-glutamyl-meso-2,6-diaminopimeloyl-D-alanyl-D-alanine + UMP. It functions in the pathway cell wall biogenesis; peptidoglycan biosynthesis. Functionally, catalyzes the initial step of the lipid cycle reactions in the biosynthesis of the cell wall peptidoglycan: transfers peptidoglycan precursor phospho-MurNAc-pentapeptide from UDP-MurNAc-pentapeptide onto the lipid carrier undecaprenyl phosphate, yielding undecaprenyl-pyrophosphoryl-MurNAc-pentapeptide, known as lipid I. This chain is Phospho-N-acetylmuramoyl-pentapeptide-transferase, found in Campylobacter hominis (strain ATCC BAA-381 / DSM 21671 / CCUG 45161 / LMG 19568 / NCTC 13146 / CH001A).